The sequence spans 677 residues: Probable potassium transport system protein Kup (677 aa).

The next 12 membrane-spanning stretches (helical) occupy residues 13–33, 54–74, 98–118, 137–157, 171–191, 217–237, 249–269, 296–316, 345–365, 374–394, 402–422, and 429–449; these read GALI…LYTM, VSLV…IIAL, WLLL…TLTP, FIFP…LLIV, IFGP…LVNI, TGIF…ALYS, VSWI…GAWI, IFGV…LISG, MYIG…VWAF, AYGL…YQFI, ILAF…LIAS, and GGYA…IWFY.

Belongs to the HAK/KUP transporter (TC 2.A.72) family.

The protein resides in the cell membrane. The enzyme catalyses K(+)(in) + H(+)(in) = K(+)(out) + H(+)(out). Functionally, transport of potassium into the cell. Likely operates as a K(+):H(+) symporter. The protein is Probable potassium transport system protein Kup of Leuconostoc mesenteroides subsp. mesenteroides (strain ATCC 8293 / DSM 20343 / BCRC 11652 / CCM 1803 / JCM 6124 / NCDO 523 / NBRC 100496 / NCIMB 8023 / NCTC 12954 / NRRL B-1118 / 37Y).